Reading from the N-terminus, the 142-residue chain is uncharacterized protein (142 aa).

Its subcellular location is the mitochondrion. This is an uncharacterized protein from Mus musculus (Mouse).